Reading from the N-terminus, the 312-residue chain is Plasminogen activator (312 aa).

Positions 1–20 are cleaved as a signal peptide; sequence MKKSSIVATIITILSGSANA. Residues 21-31 are Periplasmic-facing; it reads ASSQLIPNISP. Residues 32–40 form a beta stranded membrane-spanning segment; sequence DSFTVAAST. At 41–70 the chain is on the extracellular side; that stretch reads GMLSGKSHEMLYDAETGRKISQLDWKIKNV. The chain crosses the membrane as a beta stranded span at residues 71 to 80; the sequence is AILKGDISWD. Residues 81-84 lie on the Periplasmic side of the membrane; the sequence is PYSF. Residues 85-94 traverse the membrane as a beta stranded segment; the sequence is LTLNARGWTS. The Extracellular segment spans residues 95–131; sequence LASGSGNMDDYDWMNENQSEWTDHSSHPATNVNHANE. Catalysis depends on residues Asp-104 and Asp-106. A beta stranded transmembrane segment spans residues 132–140; that stretch reads YDLNVKGWL. Over 141–145 the chain is Periplasmic; that stretch reads LQDEN. The beta stranded transmembrane segment at 146-154 threads the bilayer; the sequence is YKAGITAGY. Over 155 to 194 the chain is Extracellular; the sequence is QETRFSWTATGGSYSYNNGAYTGNFPKGVRVIGYNQRFSM. The chain crosses the membrane as a beta stranded span at residues 195-204; the sequence is PYIGLAGQYR. Topologically, residues 205-207 are periplasmic; it reads IND. A beta stranded membrane pass occupies residues 208 to 216; that stretch reads FELNALFKF. Residues 217–244 are Extracellular-facing; sequence SDWVRAHDNDEHYMRDLTFREKTSGSRY. Residues Asp-226 and His-228 contribute to the active site. The beta stranded transmembrane segment at 245-255 threads the bilayer; it reads YGTVINAGYYV. Topologically, residues 256–258 are periplasmic; sequence TPN. A beta stranded membrane pass occupies residues 259–267; that stretch reads AKVFAEFTY. Topologically, residues 268 to 301 are extracellular; the sequence is SKYDEGKGGTQTIDKNSGDSVSIGGDAAGISNKN. The chain crosses the membrane as a beta stranded span at residues 302–312; sequence YTVTAGLQYRF.

This sequence belongs to the peptidase A26 family.

Its subcellular location is the cell outer membrane. It carries out the reaction Converts human Glu-plasminogen to plasmin by cleaving the 560-Arg-|-Val-561 peptide bond that is also hydrolyzed by the mammalian u-plasminogen activator and t-plasminogen activator. Also cleaves arginyl bonds in other proteins.. Requires bacterial lipopolysaccharide (LPS) for activation; addition of LPS to inactive protein reactivates it. In the absence of LPS the active site groove is slightly narrower, and peptide substrate binds deep within the active site groove, displacing the nucleophilic water molecule. In terms of biological role, in the mammalian host activates (cleaves) plasminogen to generate the serine protease plasmin. Plasmin degrades fibrin clots (fibrinolysis) and facilitates bacterial cell migration, enabling rapid dissemination of bacteria from the initial site of infection. Cleaves host plasminogen to generate plasmin and probably also has autocatalytic activity. Fibrinolytic activity prevails at 37 degrees Celsius whereas coagulase expression predominates at lower temperatures (28 degrees Celsius). Cleaves plasminogen; plasminogen cleavage is much higher than coagulase activity. The sequence is that of Plasminogen activator from Yersinia pestis.